Here is a 393-residue protein sequence, read N- to C-terminus: uncharacterized protein (393 aa).

The tract at residues 164 to 183 is disordered; the sequence is ASDPHPGKNSPASPTGENKE. Residues 173–183 are compositionally biased toward polar residues; it reads SPASPTGENKE.

This is an uncharacterized protein from Treponema pallidum (strain Nichols).